The sequence spans 590 residues: Aspartate--tRNA(Asp/Asn) ligase (590 aa).

E178 serves as a coordination point for L-aspartate. The tract at residues 202–205 is aspartate; the sequence is QIYK. R224 contributes to the L-aspartate binding site. ATP is bound by residues 224-226 and Q233; that span reads RDE. L-aspartate is bound at residue H453. Residue E487 coordinates ATP. Residue R494 coordinates L-aspartate. 539–542 provides a ligand contact to ATP; that stretch reads GLDR.

It belongs to the class-II aminoacyl-tRNA synthetase family. Type 1 subfamily. As to quaternary structure, homodimer.

The protein resides in the cytoplasm. It carries out the reaction tRNA(Asx) + L-aspartate + ATP = L-aspartyl-tRNA(Asx) + AMP + diphosphate. Aspartyl-tRNA synthetase with relaxed tRNA specificity since it is able to aspartylate not only its cognate tRNA(Asp) but also tRNA(Asn). Reaction proceeds in two steps: L-aspartate is first activated by ATP to form Asp-AMP and then transferred to the acceptor end of tRNA(Asp/Asn). The sequence is that of Aspartate--tRNA(Asp/Asn) ligase from Treponema denticola (strain ATCC 35405 / DSM 14222 / CIP 103919 / JCM 8153 / KCTC 15104).